A 199-amino-acid chain; its full sequence is Transcription factor 15 (199 aa).

The interval 25–67 (EENRSESDASDQSFGCCEGPEAARRGPGPGGGRRAGGGGGAGP) is disordered. A compositionally biased stretch (gly residues) spans 51–66 (PGPGGGRRAGGGGGAG). Residues 72–124 (RQRQAANARERDRTQSVNTAFTALRTLIPTEPVDRKLSKIETVRLASSYIAHL) form the bHLH domain.

In terms of assembly, heterodimer; efficient DNA binding requires dimerization with another bHLH protein, such as TCF3/E12. Interacts with MEOX2.

The protein localises to the nucleus. Its function is as follows. Early transcription factor that plays a key role in somitogenesis, paraxial mesoderm development and regulation of stem cell pluripotency. Essential for the mesenchymal to epithelial transition associated with somite formation. Required for somite morphogenesis, thereby regulating patterning of the axial skeleton and skeletal muscles. Required for proper localization of somite epithelium markers during the mesenchymal to epithelial transition. Also plays a key role in regulation of stem cell pluripotency. Promotes pluripotency exit of embryonic stem cells (ESCs) by priming ESCs for differentiation. Acts as a key regulator of self-renewal of hematopoietic stem cells (HSCs) by mediating HSCs quiescence and long-term self-renewal. Together with MEOX2, regulates transcription in heart endothelial cells to regulate fatty acid transport across heart endothelial cells. Acts by forming a heterodimer with another helix-loop-helix (bHLH) protein, such as TCF3/E12, that binds DNA on E-box motifs (5'-CANNTG-3') and activates transcription of target genes. This Homo sapiens (Human) protein is Transcription factor 15.